Here is a 402-residue protein sequence, read N- to C-terminus: Chorismate synthase (402 aa).

Positions 40 and 46 each coordinate NADP(+). Residues 134-136, 255-256, G299, 314-318, and R340 contribute to the FMN site; these read RAS, QA, and KPIAT.

It belongs to the chorismate synthase family. In terms of assembly, homotetramer. It depends on FMNH2 as a cofactor.

It carries out the reaction 5-O-(1-carboxyvinyl)-3-phosphoshikimate = chorismate + phosphate. Its pathway is metabolic intermediate biosynthesis; chorismate biosynthesis; chorismate from D-erythrose 4-phosphate and phosphoenolpyruvate: step 7/7. Its function is as follows. Catalyzes the anti-1,4-elimination of the C-3 phosphate and the C-6 proR hydrogen from 5-enolpyruvylshikimate-3-phosphate (EPSP) to yield chorismate, which is the branch point compound that serves as the starting substrate for the three terminal pathways of aromatic amino acid biosynthesis. This reaction introduces a second double bond into the aromatic ring system. This Leifsonia xyli subsp. xyli (strain CTCB07) protein is Chorismate synthase.